Consider the following 734-residue polypeptide: Photosystem I P700 chlorophyll a apoprotein A2 (734 aa).

A run of 8 helical transmembrane segments spans residues I46 to A69, L135 to Q158, L175 to L199, I273 to Y291, L330 to Y353, A369 to I395, A417 to H439, and F517 to V535. The [4Fe-4S] cluster site is built by C559 and C568. A run of 2 helical transmembrane segments spans residues A575–W596 and L643–I665. Chlorophyll a is bound by residues H654, M662, and Y670. W671 serves as a coordination point for phylloquinone. Residues L707 to A727 form a helical membrane-spanning segment.

This sequence belongs to the PsaA/PsaB family. The PsaA/B heterodimer binds the P700 chlorophyll special pair and subsequent electron acceptors. PSI consists of a core antenna complex that captures photons, and an electron transfer chain that converts photonic excitation into a charge separation. The eukaryotic PSI reaction center is composed of at least 11 subunits. P700 is a chlorophyll a/chlorophyll a' dimer, A0 is one or more chlorophyll a, A1 is one or both phylloquinones and FX is a shared 4Fe-4S iron-sulfur center. serves as cofactor.

The protein localises to the plastid. It localises to the chloroplast thylakoid membrane. The enzyme catalyses reduced [plastocyanin] + hnu + oxidized [2Fe-2S]-[ferredoxin] = oxidized [plastocyanin] + reduced [2Fe-2S]-[ferredoxin]. Functionally, psaA and PsaB bind P700, the primary electron donor of photosystem I (PSI), as well as the electron acceptors A0, A1 and FX. PSI is a plastocyanin-ferredoxin oxidoreductase, converting photonic excitation into a charge separation, which transfers an electron from the donor P700 chlorophyll pair to the spectroscopically characterized acceptors A0, A1, FX, FA and FB in turn. Oxidized P700 is reduced on the lumenal side of the thylakoid membrane by plastocyanin. The chain is Photosystem I P700 chlorophyll a apoprotein A2 from Gnetum parvifolium (Small-leaved jointfir).